The primary structure comprises 404 residues: Cytochrome b561 and DOMON domain-containing protein At2g04850 (404 aa).

A signal peptide spans 1 to 22; the sequence is MATLILSFLLLLLATKLPESLA. The 131-residue stretch at 43-173 folds into the DOMON domain; it reads QQASIAWTYH…TKIHHVWNRG (131 aa). Residues 180–380 enclose the Cytochrome b561 domain; that stretch reads SPTIHPTTST…MEVNSWVVFC (201 aa). A helical membrane pass occupies residues 217–237; the sequence is VTHGVVNAISWGFLLPAGAVT. Positions 219 and 255 each coordinate heme b. A helical transmembrane segment spans residues 256 to 276; it reads AAIQLTGFLLGTIGFSIGIVL. Residue histidine 288 participates in heme b binding. A helical membrane pass occupies residues 290–310; it reads SLGIATFTAAALQTLALLFRP. Histidine 324 contacts heme b. The next 2 helical transmembrane spans lie at 326–346 and 359–379; these read FVGY…FEVL and LCLS…WVVF.

The cofactor is heme b.

Its subcellular location is the membrane. In terms of biological role, may act as a catecholamine-responsive trans-membrane electron transporter. The protein is Cytochrome b561 and DOMON domain-containing protein At2g04850 of Arabidopsis thaliana (Mouse-ear cress).